The sequence spans 55 residues: MDIPALSVAMHQASLAQNVNIALTKKRLDTAQQNADQTLKMIQHPTLGQTIDVKA.

Residues glutamine 17–histidine 44 are a coiled coil.

This is an uncharacterized protein from Bacillus subtilis (strain 168).